The chain runs to 163 residues: Transcriptional repressor NrdR (163 aa).

The segment at Cys3–Cys34 is a zinc-finger region. One can recognise an ATP-cone domain in the interval Leu46–Asp136.

Belongs to the NrdR family. Requires Zn(2+) as cofactor.

Its function is as follows. Negatively regulates transcription of bacterial ribonucleotide reductase nrd genes and operons by binding to NrdR-boxes. This chain is Transcriptional repressor NrdR, found in Renibacterium salmoninarum (strain ATCC 33209 / DSM 20767 / JCM 11484 / NBRC 15589 / NCIMB 2235).